A 389-amino-acid polypeptide reads, in one-letter code: Phospho-N-acetylmuramoyl-pentapeptide-transferase (389 aa).

The next 10 helical transmembrane spans lie at 25 to 45, 73 to 93, 97 to 117, 135 to 155, 189 to 209, 222 to 242, 259 to 279, 286 to 306, 311 to 331, and 366 to 386; these read RAVAATITALLIGLVCGPWVI, TMGGVLILIGIAVSTLLWADL, FIWIVMLVTFGFGVIGWVDDY, FWQSLIGLFAAVYLAFSVSEA, SMTYPLGVWGFIALTYLVIVG, GLVIMPVVLVGSSLGVFAYVM, AGEMLIFCSAMGGAGLAFLWF, VFMGDVGALALGGALGTIAVI, IVLFIMGGIFVAETVSVMLQV, and QVVVRFWIITLMLCLFGLSTL.

The protein belongs to the glycosyltransferase 4 family. MraY subfamily. Mg(2+) serves as cofactor.

It localises to the cell inner membrane. It catalyses the reaction UDP-N-acetyl-alpha-D-muramoyl-L-alanyl-gamma-D-glutamyl-meso-2,6-diaminopimeloyl-D-alanyl-D-alanine + di-trans,octa-cis-undecaprenyl phosphate = di-trans,octa-cis-undecaprenyl diphospho-N-acetyl-alpha-D-muramoyl-L-alanyl-D-glutamyl-meso-2,6-diaminopimeloyl-D-alanyl-D-alanine + UMP. It participates in cell wall biogenesis; peptidoglycan biosynthesis. Its function is as follows. Catalyzes the initial step of the lipid cycle reactions in the biosynthesis of the cell wall peptidoglycan: transfers peptidoglycan precursor phospho-MurNAc-pentapeptide from UDP-MurNAc-pentapeptide onto the lipid carrier undecaprenyl phosphate, yielding undecaprenyl-pyrophosphoryl-MurNAc-pentapeptide, known as lipid I. The polypeptide is Phospho-N-acetylmuramoyl-pentapeptide-transferase (Paraburkholderia phymatum (strain DSM 17167 / CIP 108236 / LMG 21445 / STM815) (Burkholderia phymatum)).